Consider the following 474-residue polypeptide: Catalase (474 aa).

Residues H52 and N124 contribute to the active site. Heme is bound at residue Y334.

Belongs to the catalase family. It depends on heme as a cofactor.

It carries out the reaction 2 H2O2 = O2 + 2 H2O. Its function is as follows. Decomposes hydrogen peroxide into water and oxygen; serves to protect cells from the toxic effects of hydrogen peroxide. This chain is Catalase (katA), found in Campylobacter jejuni subsp. jejuni serotype O:2 (strain ATCC 700819 / NCTC 11168).